The sequence spans 455 residues: 2-oxoisovalerate dehydrogenase subunit alpha, mitochondrial (455 aa).

Residues 1–55 (MQGSAKMAMAVAVAVARVWRPSRGLGRTGLPLLRLLGARGLARFHPHRWQQQQHF) constitute a mitochondrion transit peptide. Positions 168 and 169 each coordinate thiamine diphosphate. Ser216 serves as a coordination point for K(+). Ser217 contacts thiamine diphosphate. Pro218, Thr221, and Gln222 together coordinate K(+). Glu248 lines the Mg(2+) pocket. Positions 249, 250, and 275 each coordinate thiamine diphosphate. Positions 277 and 279 each coordinate Mg(2+). His346 is a thiamine diphosphate binding site. A Phosphoserine; by BCKDK modification is found at Ser347. The residue at position 348 (Thr348) is a Phosphothreonine. Phosphoserine occurs at positions 349 and 357. The residue at position 366 (Lys366) is an N6-acetyllysine; alternate. Position 366 is an N6-succinyllysine; alternate (Lys366). N6-succinyllysine is present on Lys390.

Belongs to the BCKDHA family. As to quaternary structure, heterotetramer of 2 alpha/BCKDHA and 2 beta chains/BCKDHB that forms the branched-chain alpha-keto acid decarboxylase (E1) component of the BCKD complex. The branched-chain alpha-ketoacid dehydrogenase is a large complex composed of three major building blocks E1, E2 and E3. It is organized around E2, a 24-meric cubic core composed of DBT, to which are associated 6 to 12 copies of E1, and approximately 6 copies of the dehydrogenase E3, a DLD dimer. Interacts with PPM1K. The cofactor is thiamine diphosphate. Mg(2+) serves as cofactor. In terms of processing, phosphorylated at Ser-347 by BCKDK and dephosphorylated by protein phosphatase PPM1K. In terms of tissue distribution, expressed in kidney (at protein level).

Its subcellular location is the mitochondrion matrix. It carries out the reaction N(6)-[(R)-lipoyl]-L-lysyl-[protein] + 3-methyl-2-oxobutanoate + H(+) = N(6)-[(R)-S(8)-2-methylpropanoyldihydrolipoyl]-L-lysyl-[protein] + CO2. Its function is as follows. Together with BCKDHB forms the heterotetrameric E1 subunit of the mitochondrial branched-chain alpha-ketoacid dehydrogenase (BCKD) complex. The BCKD complex catalyzes the multi-step oxidative decarboxylation of alpha-ketoacids derived from the branched-chain amino-acids valine, leucine and isoleucine producing CO2 and acyl-CoA which is subsequently utilized to produce energy. The E1 subunit catalyzes the first step with the decarboxylation of the alpha-ketoacid forming an enzyme-product intermediate. A reductive acylation mediated by the lipoylamide cofactor of E2 extracts the acyl group from the E1 active site for the next step of the reaction. The sequence is that of 2-oxoisovalerate dehydrogenase subunit alpha, mitochondrial (BCKDHA) from Bos taurus (Bovine).